The primary structure comprises 452 residues: 51.5 kDa protein (452 aa).

Residues Met1–Gly126 enclose the Helicase ATP-binding domain. The Helicase C-terminal domain maps to Asp177–Asp333. The segment at Cys331–Cys348 is a zinc-finger region.

Functionally, may play a role in either regulating bacteriophages replication or specifying expression of its own genes. The chain is 51.5 kDa protein from Lactococcus (lactic streptococci).